The following is a 265-amino-acid chain: Mlc titration factor A (265 aa).

Zn(2+)-binding residues include histidine 111, histidine 148, histidine 152, and glutamate 211.

The protein belongs to the MtfA family. In terms of assembly, interacts with Mlc. Zn(2+) is required as a cofactor.

The protein resides in the cytoplasm. In terms of biological role, involved in the modulation of the activity of the glucose-phosphotransferase system (glucose-PTS). Interacts with the transcriptional repressor Mlc, preventing its interaction with DNA and leading to the modulation of expression of genes regulated by Mlc, including ptsG, which encodes the PTS system glucose-specific EIICB component. Shows zinc-dependent metallopeptidase activity. The chain is Mlc titration factor A from Escherichia coli (strain UTI89 / UPEC).